Here is a 536-residue protein sequence, read N- to C-terminus: Organic anion transporter 3 (536 aa).

The Cytoplasmic segment spans residues 1-11 (MTFSEILDRVG). Residue serine 4 is modified to Phosphoserine. Residues 12–32 (SMGPFQYLHVTLLALPVLGIA) form a helical membrane-spanning segment. At 33–123 (NHNLLQIFTA…LVCSSNKLKE (91 aa)) the chain is on the extracellular side. Asparagine 81 and asparagine 86 each carry an N-linked (GlcNAc...) asparagine glycan. A helical membrane pass occupies residues 124–144 (MAQSIFMAGILVGGPVIGELS). The Cytoplasmic portion of the chain corresponds to 145–158 (DRFGRKPILTWSYL). A helical transmembrane segment spans residues 159-179 (MLAASGSGAAFSPSLPVYMIF). Position 180 (arginine 180) is a topological domain, extracellular. Residues 181–201 (FLCGCSISGISLSTVILNVEW) traverse the membrane as a helical segment. Over 202–212 (VPTSMRAISST) the chain is Cytoplasmic. The chain crosses the membrane as a helical span at residues 213 to 233 (SIGYCYTIGQFILSGLAYAIP). Over 234–236 (QWR) the chain is Extracellular. A helical transmembrane segment spans residues 237–257 (WLQLTSSAPFFIFSLLSWWVP). The Cytoplasmic portion of the chain corresponds to 258–327 (ESIRWLVLSG…FRVSILRRVT (70 aa)). A helical transmembrane segment spans residues 328-348 (FCLSLAWFSTGFAYYSLAMGV). Residues 349 to 354 (EEFGVN) are Extracellular-facing. Residues 355–375 (IYILQIIFGGVDIPAKFITIL) form a helical membrane-spanning segment. The Cytoplasmic segment spans residues 376-383 (SLSYLGRR). The chain crosses the membrane as a helical span at residues 384-404 (ITQSFLLLLAGGAILALIFVP). Over 405 to 411 (SEMQLLR) the chain is Extracellular. The helical transmembrane segment at 412–432 (TALAVFGKGCLSGSFSCLFLY) threads the bilayer. Topologically, residues 433 to 471 (TSELYPTVLRQTGMGISNVWARVGSMIAPLVKITGELQP) are cytoplasmic. A helical membrane pass occupies residues 472 to 492 (FIPNVIFGTTALLGGSAAFFL). Residues 493-536 (LETLNRPLPETIEDIQNWHKQVQKTKQESEAEKASQIIPLKTGG) are Extracellular-facing. Residues 515–536 (QKTKQESEAEKASQIIPLKTGG) are disordered.

The protein belongs to the major facilitator (TC 2.A.1) superfamily. Organic cation transporter (TC 2.A.1.19) family. In terms of tissue distribution, expressed in the liver, brain, kidney, choroid plexus and weakly in the eye. Moderately expressed (at protein level) in the brain capillary endothelial cells (BCEC).

The protein resides in the basolateral cell membrane. The catalysed reaction is estrone 3-sulfate(out) + glutarate(in) = estrone 3-sulfate(in) + glutarate(out). It carries out the reaction estrone 3-sulfate(in) + 2-oxoglutarate(out) = estrone 3-sulfate(out) + 2-oxoglutarate(in). The enzyme catalyses glutarate(in) + 2-oxoglutarate(out) = glutarate(out) + 2-oxoglutarate(in). It catalyses the reaction urate(in) + 2-oxoglutarate(out) = urate(out) + 2-oxoglutarate(in). The catalysed reaction is taurocholate(out) + glutarate(in) = taurocholate(in) + glutarate(out). It carries out the reaction dehydroepiandrosterone 3-sulfate(out) + glutarate(in) = dehydroepiandrosterone 3-sulfate(in) + glutarate(out). The enzyme catalyses prostaglandin F2alpha(out) + glutarate(in) = prostaglandin F2alpha(in) + glutarate(out). It catalyses the reaction prostaglandin F2alpha(out) + 2-oxoglutarate(in) = prostaglandin F2alpha(in) + 2-oxoglutarate(out). The catalysed reaction is (R)-carnitine(out) + 2-oxoglutarate(in) = (R)-carnitine(in) + 2-oxoglutarate(out). It carries out the reaction glutarate(in) + (R)-carnitine(out) = glutarate(out) + (R)-carnitine(in). The enzyme catalyses prostaglandin E2(out) + 2-oxoglutarate(in) = prostaglandin E2(in) + 2-oxoglutarate(out). It catalyses the reaction prostaglandin E2(out) + glutarate(in) = prostaglandin E2(in) + glutarate(out). The catalysed reaction is urate(in) + glutarate(out) = urate(out) + glutarate(in). It carries out the reaction taurocholate(out) + 2-oxoglutarate(in) = taurocholate(in) + 2-oxoglutarate(out). The enzyme catalyses dehydroepiandrosterone 3-sulfate(out) + 2-oxoglutarate(in) = dehydroepiandrosterone 3-sulfate(in) + 2-oxoglutarate(out). It catalyses the reaction kynurenate(out) + a dicarboxylate(in) = kynurenate(in) + a dicarboxylate(out). The catalysed reaction is (indol-3-yl)acetate(out) + a dicarboxylate(in) = (indol-3-yl)acetate(in) + a dicarboxylate(out). It carries out the reaction indoxyl sulfate(out) + a dicarboxylate(in) = indoxyl sulfate(in) + a dicarboxylate(out). The enzyme catalyses N-benzoylglycine(out) + a dicarboxylate(in) = N-benzoylglycine(in) + a dicarboxylate(out). It catalyses the reaction 3-carboxy-4-methyl-5-propyl-2-furanpropanoate(out) + a dicarboxylate(in) = 3-carboxy-4-methyl-5-propyl-2-furanpropanoate(in) + a dicarboxylate(out). The catalysed reaction is (6R)-L-erythro-5,6,7,8-tetrahydrobiopterin(out) + a dicarboxylate(in) = (6R)-L-erythro-5,6,7,8-tetrahydrobiopterin(in) + a dicarboxylate(out). It carries out the reaction L-erythro-7,8-dihydrobiopterin(out) + a dicarboxylate(in) = L-erythro-7,8-dihydrobiopterin(in) + a dicarboxylate(out). The enzyme catalyses L-sepiapterin(out) + a dicarboxylate(in) = L-sepiapterin(in) + a dicarboxylate(out). In terms of biological role, functions as an organic anion/dicarboxylate exchanger that couples organic anion uptake indirectly to the sodium gradient. Transports organic anions such as estrone 3-sulfate (E1S) and urate in exchange for dicarboxylates such as glutarate or ketoglutarate (2-oxoglutarate). Plays an important role in the excretion of endogenous and exogenous organic anions, especially from the kidney and the brain. E1S transport is pH- and chloride-dependent and may also involve E1S/cGMP exchange. Responsible for the transport of prostaglandin E2 (PGE2) and prostaglandin F2(alpha) (PGF2(alpha)) in the basolateral side of the renal tubule. Involved in the transport of neuroactive tryptophan metabolites kynurenate and xanthurenate. Functions as a biopterin transporters involved in the uptake and the secretion of coenzymes tetrahydrobiopterin (BH4), dihydrobiopterin (BH2) and sepiapterin to urine, thereby determining baseline levels of blood biopterins. May be involved in the basolateral transport of steviol, a metabolite of the popular sugar substitute stevioside. May participate in the detoxification/ renal excretion of drugs and xenobiotics, such as the histamine H(2)-receptor antagonists fexofenadine and cimetidine, the antibiotic benzylpenicillin (PCG), the anionic herbicide 2,4-dichloro-phenoxyacetate (2,4-D), the diagnostic agent p-aminohippurate (PAH), the antiviral acyclovir (ACV), and the mycotoxin ochratoxin (OTA), by transporting these exogenous organic anions across the cell membrane in exchange for dicarboxylates such as 2-oxoglutarate. Contributes to the renal uptake of potent uremic toxins (indoxyl sulfate (IS), indole acetate (IA), hippurate/N-benzoylglycine (HA) and 3-carboxy-4-methyl-5-propyl-2-furanpropionate (CMPF)), pravastatin, PCG, E1S and dehydroepiandrosterone sulfate (DHEAS), and is partly involved in the renal uptake of temocaprilat (an angiotensin-converting enzyme (ACE) inhibitor). May contribute to the release of cortisol in the adrenals. Involved in one of the detoxification systems on the choroid plexus (CP), removes substrates such as E1S or taurocholate (TC), PCG, 2,4-D and PAH, from the cerebrospinal fluid (CSF) to the blood for eventual excretion in urine and bile. Regulates the CSF concentration of histamine H(2)-receptor antagonists cimetidine and ranitidine at the CP. Also contributes to the uptake of several other organic compounds such as the prostanoids prostaglandin E(2) and prostaglandin F(2-alpha), L-carnitine, and the therapeutic drugs allopurinol, 6-mercaptopurine (6-MP) and 5-fluorouracil (5-FU). Mediates the uptake from brain of organic anions, such as E1S, PAH, and OTA. Mediates the transport of PAH, PCG, and the statins pravastatin and pitavastatin, from the cerebrum into the blood circulation across the blood-brain barrier (BBB). In summary, plays a role in the efflux of drugs and xenobiotics, helping reduce their undesired toxicological effects on the body. In Rattus norvegicus (Rat), this protein is Organic anion transporter 3 (Slc22a8).